Here is a 358-residue protein sequence, read N- to C-terminus: MPSVSPAGPSAGAVPNATAVTTVRTNASGLEVPLFHLFARLDEELHGTFPGLWLALMAVHGAIFLAGLVLNGLALYVFCCRTRAKTPSVIYTINLVVTDLLVGLSLPTRFAVYYGARGCLRCAFPHVLGYFLNMHCSILFLTCICVDRYLAIVRPEGSRRCRQPACARAVCAFVWLAAGAVTLSVLGVTGSRPCCRVFALTVLEFLLPLLVISVFTGRIMCALSRPGLLHQGRQRRVRAMQLLLTVLIIFLVCFTPFHARQVAVALWPDMPHHTSLVVYHVAVTLSSLNSCMDPIVYCFVTSGFQATVRGLFGQHGEREPSSGDVVSMHRSSKGSGRHHILSAGPHALTQALANGPEA.

At Met-1–Thr-48 the chain is on the extracellular side. Residues Asn-16 and Asn-26 are each glycosylated (N-linked (GlcNAc...) asparagine). The chain crosses the membrane as a helical span at residues Phe-49–Val-69. Over Leu-70–Thr-86 the chain is Cytoplasmic. The helical transmembrane segment at Pro-87 to Pro-107 threads the bilayer. The Extracellular segment spans residues Thr-108–Pro-125. A helical transmembrane segment spans residues His-126 to Val-146. Over Asp-147 to Arg-168 the chain is Cytoplasmic. A helical membrane pass occupies residues Ala-169–Thr-189. The Extracellular portion of the chain corresponds to Gly-190 to Arg-196. The chain crosses the membrane as a helical span at residues Val-197–Gly-217. Over Arg-218 to Arg-238 the chain is Cytoplasmic. The helical transmembrane segment at Ala-239 to Ala-259 threads the bilayer. The Extracellular portion of the chain corresponds to Arg-260 to Ser-275. The helical transmembrane segment at Leu-276–Val-296 threads the bilayer. The Cytoplasmic portion of the chain corresponds to Tyr-297–Ala-358. The segment at His-315 to His-339 is disordered. Basic residues predominate over residues Arg-330 to His-339.

It belongs to the G-protein coupled receptor 1 family. In terms of tissue distribution, ubiquitous with highest levels in intestinal tissues. In the brain detected in thalamus, putamen, and caudate, but not in frontal cortex, pons and hypothalamus.

It is found in the cell membrane. Orphan receptor with constitutive G(i) signaling activity that activate cyclic AMP. The sequence is that of G-protein coupled receptor 20 (GPR20) from Homo sapiens (Human).